The primary structure comprises 382 residues: Guanylate kinase 1 (382 aa).

The Guanylate kinase-like domain maps to Gln-128–Ser-310. An ATP-binding site is contributed by Gly-135 to Gly-142. Active-site residues include Arg-168, Arg-261, and Arg-272. ATP contacts are provided by Asn-295 and Asp-296.

The protein belongs to the guanylate kinase family. In terms of assembly, monomer.

Its subcellular location is the cytoplasm. It localises to the nucleus. It catalyses the reaction GMP + ATP = GDP + ADP. Its function is as follows. Essential for recycling GMP and indirectly, cGMP. The protein is Guanylate kinase 1 (GK1) of Oryza sativa subsp. japonica (Rice).